A 276-amino-acid polypeptide reads, in one-letter code: Palmitoyltransferase ZDHHC22 (276 aa).

Over 1-9 (MGKLKLLNT) the chain is Cytoplasmic. Residues 10-30 (IAPAYFYAATVVTFALHFLLF) form a helical membrane-spanning segment. Topologically, residues 31–45 (TPTIFQSSDVTINPA) are lumenal. The chain crosses the membrane as a helical span at residues 46 to 66 (MLAHISIFLFLMGNALGNYIM). Residues 67–131 (TIRNPSESAN…NCIGNRNMRY (65 aa)) are Cytoplasmic-facing. One can recognise a DHHC domain in the interval 101-137 (HFCKVCKKVILKRDHHCFFTGNCIGNRNMRYFIMFSI). The active-site S-palmitoyl cysteine intermediate is the C117. The helical transmembrane segment at 132-152 (FIMFSIYTSSSCLYSLVIGVA) threads the bilayer. Topologically, residues 153 to 165 (YLTIEYSISFENP) are lumenal. A helical transmembrane segment spans residues 166–186 (LTFLTLLPLSTGYFFLGLISG). Over 187–188 (LQ) the chain is Cytoplasmic. Residues 189–209 (FFLVIMLYIWLGIGLVSVGFC) traverse the membrane as a helical segment. Topologically, residues 210–276 (CQQLLLVARG…WQVYHDHKHD (67 aa)) are lumenal.

This sequence belongs to the DHHC palmitoyltransferase family.

The protein resides in the endoplasmic reticulum membrane. The protein localises to the golgi apparatus membrane. The catalysed reaction is L-cysteinyl-[protein] + hexadecanoyl-CoA = S-hexadecanoyl-L-cysteinyl-[protein] + CoA. Palmitoyltransferase that could catalyze the addition of palmitate onto various protein substrates and be involved in a variety of cellular processes. This chain is Palmitoyltransferase ZDHHC22 (zdhhc22), found in Danio rerio (Zebrafish).